A 310-amino-acid polypeptide reads, in one-letter code: Ribosomal RNA small subunit methyltransferase H (310 aa).

Residues 32–34, aspartate 52, phenylalanine 79, aspartate 100, and glutamine 107 each bind S-adenosyl-L-methionine; that span reads GGH.

It belongs to the methyltransferase superfamily. RsmH family.

It localises to the cytoplasm. It carries out the reaction cytidine(1402) in 16S rRNA + S-adenosyl-L-methionine = N(4)-methylcytidine(1402) in 16S rRNA + S-adenosyl-L-homocysteine + H(+). Specifically methylates the N4 position of cytidine in position 1402 (C1402) of 16S rRNA. In Bacillus mycoides (strain KBAB4) (Bacillus weihenstephanensis), this protein is Ribosomal RNA small subunit methyltransferase H.